A 540-amino-acid polypeptide reads, in one-letter code: GMP synthase [glutamine-hydrolyzing] (540 aa).

One can recognise a Glutamine amidotransferase type-1 domain in the interval 26–216 (IIIILDFGSQ…VYHICECEPT (191 aa)). Residue C103 is the Nucleophile of the active site. Active-site residues include H190 and E192. In terms of domain architecture, GMPS ATP-PPase spans 217–415 (WTTAAFVEEA…VGLPEEIVQR (199 aa)). Residue 244–250 (SGGVDSS) participates in ATP binding.

Homodimer.

It carries out the reaction XMP + L-glutamine + ATP + H2O = GMP + L-glutamate + AMP + diphosphate + 2 H(+). It participates in purine metabolism; GMP biosynthesis; GMP from XMP (L-Gln route): step 1/1. Catalyzes the synthesis of GMP from XMP. This is GMP synthase [glutamine-hydrolyzing] from Nostoc sp. (strain PCC 7120 / SAG 25.82 / UTEX 2576).